Here is a 1463-residue protein sequence, read N- to C-terminus: Collagen alpha-1(I) chain (1463 aa).

The signal sequence occupies residues 1-22; sequence MFSFVDLRLLLLLAATALLTHG. The propeptide at 23–161 is N-terminal propeptide; sequence QEEGQEEGQE…PPGLGGNFAP (139 aa). The VWFC domain occupies 38–96; it reads VTCVQNGLRYHDRDVWKPVPCQICVCDNGNVLCDDVICDELKDCPNAKVPTDECCPVCP. The disordered stretch occupies residues 98-1217; it reads GQESPTDQET…AHDGGRYYRA (1120 aa). The segment covering 138 to 153 has biased composition (pro residues); that stretch reads PGLPGPPGPPGPPGPP. At glutamine 162 the chain carries Pyrrolidone carboxylic acid. Positions 162-177 are nonhelical region (N-terminal); that stretch reads QLSYGYDEKSTGISVP. Lysine 170 carries the allysine modification. Position 171 is a phosphoserine (serine 171). The interval 178–1191 is triple-helical region; it reads GPMGPSGPRG…PGPPGPPGPP (1014 aa). A 4-hydroxyproline mark is found at proline 189, proline 192, proline 195, proline 204, proline 207, proline 210, proline 225, proline 240, proline 246, proline 255, and proline 261. A compositionally biased stretch (low complexity) spans 197–216; sequence PQGFQGPPGEPGEPGASGPM. The span at 228 to 242 shows a compositional bias: basic and acidic residues; it reads NGDDGEAGKPGRPGE. Lysine 264 is subject to 5-hydroxylysine; alternate. A glycan (O-linked (Gal...) hydroxylysine; alternate) is linked at lysine 264. Position 270 is a phosphoserine (serine 270). Residues lysine 276 and lysine 285 each carry the 5-hydroxylysine modification. Over residues 278 to 294 the composition is skewed to low complexity; that stretch reads DAGPAGPKGEPGSPGEN. Residues proline 288, proline 291, proline 297, proline 306, and proline 312 each carry the 4-hydroxyproline modification. Low complexity predominate over residues 317 to 330; the sequence is PAGARGNDGATGAA. Residues 332–344 are compositionally biased toward pro residues; it reads PPGPTGPAGPPGF. 4-hydroxyproline is present on residues proline 333, proline 342, and proline 345. The segment covering 349–358 has biased composition (gly residues); that stretch reads GAKGEGGPQG. A 4-hydroxyproline mark is found at proline 372, proline 375, proline 387, proline 393, proline 402, proline 408, proline 411, and proline 426. Low complexity predominate over residues 378 to 417; that stretch reads AGAAGPAGNPGADGQPGAKGANGAPGIAGAPGFPGARGPS. Lysine 429 is subject to 5-hydroxylysine. 4-hydroxyproline occurs at positions 435, 438, 450, 459, 474, 480, 489, and 495. Over residues 484–493 the composition is skewed to gly residues; it reads GERGGPGSRG. Low complexity predominate over residues 494–525; sequence FPGADGVAGPKGPAGERGAPGPAGPKGSPGEA. A 5-hydroxylysine modification is found at lysine 504. Proline 513, proline 522, proline 528, proline 534, proline 543, proline 546, proline 555, proline 564, proline 570, proline 582, proline 591, proline 600, proline 603, proline 621, proline 639, proline 645, proline 651, proline 657, proline 663, proline 669, proline 681, proline 690, proline 702, proline 714, proline 717, proline 723, proline 729, and proline 738 each carry 4-hydroxyproline. A compositionally biased stretch (low complexity) spans 537-563; sequence KGLTGSPGSPGPDGKTGPPGPAGQDGR. Residues 572 to 591 show a composition bias toward low complexity; that stretch reads ARGQAGVMGFPGPKGAAGEP. Low complexity predominate over residues 633–660; it reads QGPAGSPGFQGLPGPAGPPGEAGKPGEQ. Residues 695–723 show a composition bias toward low complexity; the sequence is PRGANGAPGNDGAKGDAGAPGAPGSQGAP. The short motif at 744–746 is the Cell attachment site element; that stretch reads RGD. Lysine 750 is modified (5-hydroxylysine). 3 positions are modified to 4-hydroxyproline: proline 756, proline 771, and proline 777. Positions 783 to 797 are enriched in low complexity; that stretch reads AGPSGPAGPTGARGA. Serine 786 carries the phosphoserine modification. A 4-hydroxyproline mark is found at proline 798, proline 804, proline 807, proline 816, proline 822, proline 840, proline 849, and proline 858. A compositionally biased stretch (low complexity) spans 810 to 837; it reads AGFAGPPGADGQPGAKGEPGDAGAKGDA. The span at 839–851 shows a compositional bias: pro residues; the sequence is PPGPAGPAGPPGP. A compositionally biased stretch (low complexity) spans 852 to 882; the sequence is IGNVGAPGPKGARGSAGPPGATGFPGAAGRV. The residue at position 861 (lysine 861) is a 5-hydroxylysine. 4-hydroxyproline occurs at positions 870 and 876. Position 884 is a 3-hydroxyproline (proline 884). 4-hydroxyproline occurs at positions 885, 894, 897, 918, 927, 936, 945, 963, 972, 975, 981, 996, 1002, 1008, 1017, and 1023. The segment covering 930-954 has biased composition (low complexity); that stretch reads AGEKGAPGADGPAGAPGTPGPQGIA. Residues 995-1005 are compositionally biased toward pro residues; it reads PPGPMGPPGLA. Lysine 1032 carries the post-translational modification 5-hydroxylysine. The segment covering 1041-1056 has biased composition (pro residues); the sequence is AGPPGAPGAPGAPGPV. Proline 1044, proline 1047, and proline 1050 each carry 4-hydroxyproline. Over residues 1077–1091 the composition is skewed to low complexity; it reads IGPVGARGPAGPQGP. The Cell attachment site signature appears at 1092-1094; it reads RGD. Over residues 1092-1106 the composition is skewed to basic and acidic residues; sequence RGDKGETGEQGDRGI. Residue lysine 1095 is modified to 5-hydroxylysine. A 5-hydroxylysine; alternate modification is found at lysine 1107. Lysine 1107 carries O-linked (Gal...) hydroxylysine; alternate glycosylation. A 4-hydroxyproline mark is found at proline 1119, proline 1122, proline 1125, proline 1143, and proline 1158. Residues 1125 to 1149 show a composition bias toward low complexity; the sequence is PGEQGPSGASGPAGPRGPPGSAGSP. 3-hydroxyproline is present on proline 1163. At proline 1164 the chain carries 4-hydroxyproline. Positions 1176–1191 are enriched in pro residues; the sequence is AGPPGPPGPPGPPGPP. Proline 1178 carries the post-translational modification 3-hydroxyproline. Residue proline 1179 is modified to 4-hydroxyproline. Proline 1181 is modified (3-hydroxyproline). Residue proline 1182 is modified to 4-hydroxyproline. Proline 1184 bears the 3-hydroxyproline mark. Proline 1185, proline 1188, and proline 1191 each carry 4-hydroxyproline. Residues 1192-1215 form a nonhelical region (C-terminal) region; that stretch reads SGGYDLSFLPQPPQEKAHDGGRYY. The span at 1206–1217 shows a compositional bias: basic and acidic residues; that stretch reads EKAHDGGRYYRA. The residue at position 1207 (lysine 1207) is an Allysine. A propeptide spans 1218–1463 (C-terminal propeptide); that stretch reads DDANVVRDRD…GFDVGPACFL (246 aa). The Fibrillar collagen NC1 domain occupies 1228–1463; sequence LEVDTTLKSL…GFDVGPACFL (236 aa). 3 disulfide bridges follow: cysteine 1258–cysteine 1290, cysteine 1298–cysteine 1461, and cysteine 1369–cysteine 1414. The Ca(2+) site is built by aspartate 1276, asparagine 1278, glutamine 1279, cysteine 1281, and aspartate 1284.

Belongs to the fibrillar collagen family. In terms of assembly, trimers of one alpha 2(I) and two alpha 1(I) chains. Interacts with MRC2. Interacts with TRAM2. Interacts with MFAP4 in a Ca (2+)-dependent manner. In terms of processing, contains mostly 4-hydroxyproline. Proline residues at the third position of the tripeptide repeating unit (G-X-Y) are hydroxylated in some or all of the chains. Contains 3-hydroxyproline at a few sites. This modification occurs on the first proline residue in the sequence motif Gly-Pro-Hyp, where Hyp is 4-hydroxyproline. Post-translationally, lysine residues at the third position of the tripeptide repeating unit (G-X-Y) are 5-hydroxylated in some or all of the chains. In terms of processing, O-glycosylated on hydroxylated lysine residues. The O-linked glycan consists of a Glc-Gal disaccharide. As to expression, forms the fibrils of tendon, ligaments and bones. In bones the fibrils are mineralized with calcium hydroxyapatite.

It is found in the secreted. The protein localises to the extracellular space. The protein resides in the extracellular matrix. Type I collagen is a member of group I collagen (fibrillar forming collagen). This is Collagen alpha-1(I) chain (COL1A1) from Bos taurus (Bovine).